The primary structure comprises 305 residues: Tyrosine recombinase XerC (305 aa).

The 92-residue stretch at 4–95 folds into the Core-binding (CB) domain; it reads TSIQALINKW…AVKNFYRFLE (92 aa). Residues 116–298 enclose the Tyr recombinase domain; the sequence is LLPKALSEDD…SIKHLEAVYT (183 aa). Catalysis depends on residues Arg159, Lys182, His250, Arg253, and His276. Tyr285 serves as the catalytic O-(3'-phospho-DNA)-tyrosine intermediate.

Belongs to the 'phage' integrase family. XerC subfamily. As to quaternary structure, forms a cyclic heterotetrameric complex composed of two molecules of XerC and two molecules of XerD.

The protein localises to the cytoplasm. Site-specific tyrosine recombinase, which acts by catalyzing the cutting and rejoining of the recombining DNA molecules. The XerC-XerD complex is essential to convert dimers of the bacterial chromosome into monomers to permit their segregation at cell division. It also contributes to the segregational stability of plasmids. The polypeptide is Tyrosine recombinase XerC (Rickettsia massiliae (strain Mtu5)).